A 471-amino-acid polypeptide reads, in one-letter code: Membrane-associated sulfotransferase kil1 (471 aa).

Residues 1 to 12 (MSTTSMILTKKN) lie on the Cytoplasmic side of the membrane. Residues 13 to 33 (IIILSIIIITIIAYQFYITSP) form a helical; Signal-anchor for type II membrane protein membrane-spanning segment. Residues 34-471 (QSFPSSNTIT…LLNRDFKWQN (438 aa)) are Lumenal-facing. An N-linked (GlcNAc...) asparagine glycan is attached at asparagine 47. Composition is skewed to low complexity over residues 89–105 (NQNENQNQINNEYNNNK) and 112–127 (NNNNNNYNNNNNNNNN). Positions 89–127 (NQNENQNQINNEYNNNKLNDEQENNNNNNYNNNNNNNNN) are disordered. 3'-phosphoadenylyl sulfate contacts are provided by residues 167 to 172 (KSGTTF), arginine 252, and serine 260. Residues asparagine 324 and asparagine 344 are each glycosylated (N-linked (GlcNAc...) asparagine). Tyrosine 348 provides a ligand contact to 3'-phosphoadenylyl sulfate.

Belongs to the sulfotransferase 1 family.

The protein resides in the membrane. Sulfotransferase involved in intracellular killing of bacteria. The protein is Membrane-associated sulfotransferase kil1 (kil1) of Dictyostelium discoideum (Social amoeba).